Consider the following 341-residue polypeptide: Fructose-1,6-bisphosphatase, cytosolic (341 aa).

Residues Glu-71, Glu-100, Asp-121, Leu-123, and Asp-124 each contribute to the Mg(2+) site. Residues 124–127 (DGCS), Asn-215, Tyr-247, Tyr-267, and Lys-277 each bind substrate. Mg(2+) is bound at residue Glu-283.

It belongs to the FBPase class 1 family. The cofactor is Mg(2+).

It is found in the cytoplasm. The catalysed reaction is beta-D-fructose 1,6-bisphosphate + H2O = beta-D-fructose 6-phosphate + phosphate. This chain is Fructose-1,6-bisphosphatase, cytosolic, found in Beta vulgaris (Sugar beet).